Reading from the N-terminus, the 172-residue chain is Nicotinamide-nucleotide adenylyltransferase (172 aa).

It belongs to the archaeal NMN adenylyltransferase family.

It localises to the cytoplasm. It catalyses the reaction beta-nicotinamide D-ribonucleotide + ATP + H(+) = diphosphate + NAD(+). The protein operates within cofactor biosynthesis; NAD(+) biosynthesis; NAD(+) from nicotinamide D-ribonucleotide: step 1/1. The protein is Nicotinamide-nucleotide adenylyltransferase of Sulfurisphaera tokodaii (strain DSM 16993 / JCM 10545 / NBRC 100140 / 7) (Sulfolobus tokodaii).